The chain runs to 81 residues: Delta-conotoxin-like Ac6.3 (81 aa).

The signal sequence occupies residues 1-22; that stretch reads MKLTCVMIVAVLFLTAWTFVTA. Residues 23-51 constitute a propeptide that is removed on maturation; the sequence is DDSRNGLENLSPKARHEMKNPEASKSNKR. 3 disulfides stabilise this stretch: Cys54–Cys69, Cys61–Cys73, and Cys68–Cys78.

It belongs to the conotoxin O1 superfamily. In terms of tissue distribution, expressed by the venom duct.

It localises to the secreted. In terms of biological role, delta-conotoxins bind to site 6 of voltage-gated sodium channels (Nav) and inhibit the inactivation process. The sequence is that of Delta-conotoxin-like Ac6.3 from Conus achatinus (Little frog cone).